A 292-amino-acid chain; its full sequence is MTKTLLDGPGRVLESVYPRFLVDLAQGDDARLPQAHQQQFRERLMQELLSRVQLQTWTNGGMLNAPLSLRLTLVEKLASMLDPGHLALTQIAQHLALLQKMDHRQHSAFPELPQQIAALYEWFSARCRWKEKALTQRGLLVQAGDQSEQIFTRWRAGAYNAWSLPGRCFIVLEELRWGAFGDACRLGSPQAVALLLGDLLEKATQHLAESINAAPTTRHYYHQWFASSTVPTGGEHADFLSWLGKWTTADKQPVCWSVTQRWQTVALGMPRLCSAQRLAGAMLEEIFSVNLA.

This is an uncharacterized protein from Escherichia coli (strain K12).